The chain runs to 1726 residues: Transcription elongation factor SPT6 (1726 aa).

3 stretches are compositionally biased toward acidic residues: residues 1–18, 31–45, and 55–79; these read MSDFIESEAEESEEEFEE, EEDEEEEEENTEDQD, and DDDDVEEEEEEERGEPPAGEDSDSG. Disordered regions lie at residues 1-196, 219-248, and 482-512; these read MSDF…KGKK, AEFDTEAYDHAEEEEEDQDDESWDRPKKQT, and EVSEEDGEEAEVEEEEEEEEQKGPDLKQASR. Residue S90 is modified to Phosphoserine. Residues 93–104 show a composition bias toward acidic residues; that stretch reads DYLDDDDLDLIE. A compositionally biased stretch (basic residues) spans 110-120; it reads KVKRRKKKYSR. 4 stretches are compositionally biased toward acidic residues: residues 146–157, 166–186, 219–240, and 484–501; these read GDGEGEVEDGEA, DEEEEDDEESDIDDFIVDDDG, AEFDTEAYDHAEEEEEDQDDES, and SEEDGEEAEVEEEEEEEE. A compositionally biased stretch (basic and acidic residues) spans 502–512; it reads QKGPDLKQASR. Residues 806-865 are a coiled coil; that stretch reads LKRRNAWREDEREKKQQDVENLKKFLLSKKPHVVAVSGENRDAHMVMEDIKRTISELEQN. In terms of domain architecture, S1 motif spans 1204 to 1273; that stretch reads WNHFDSGSCP…EKFNVDLTCR (70 aa). Residues 1316–1426 enclose the SH2 domain; sequence YIKRVIAHPS…LLGHKYFHEC (111 aa). A Phosphothreonine modification is found at T1522. A Phosphoserine modification is found at S1525. The span at 1611 to 1627 shows a compositional bias: polar residues; that stretch reads LMTPSYSYTTPGQQQAM. Positions 1611–1726 are disordered; it reads LMTPSYSYTT…ATPLLDEMDR (116 aa). 2 stretches are compositionally biased toward low complexity: residues 1628-1640 and 1647-1656; these read TTPQYPSSTPQSS and SSSTPSSSSS. Residues 1657–1669 show a composition bias toward polar residues; that stretch reads RVRTPQPKASSHT.

This sequence belongs to the SPT6 family.

Its subcellular location is the nucleus. Functionally, histone H3-H4 chaperone that plays a role in maintenance of chromatin structure during RNA polymerase II transcription elongation. Promotes the activation of the myogenic gene program by entailing erasure of the repressive H3K27me3 epigenetic mark through stabilization of the chromatin interaction of the H3K27 demethylase KDM6A. Plays an important role during early patterning and somitogenesis of the embryo. This Danio rerio (Zebrafish) protein is Transcription elongation factor SPT6 (supt6h).